A 36-amino-acid chain; its full sequence is Photosystem I reaction center subunit VIII (36 aa).

The chain crosses the membrane as a helical span at residues 6 to 28 (LPSIFVPLVGLMFPAIAMASLSL).

Belongs to the PsaI family.

The protein resides in the plastid. The protein localises to the chloroplast thylakoid membrane. Functionally, may help in the organization of the PsaL subunit. The protein is Photosystem I reaction center subunit VIII of Calycanthus floridus var. glaucus (Eastern sweetshrub).